The sequence spans 405 residues: Farnesyl pyrophosphate synthase (405 aa).

The Mg(2+) site is built by aspartate 158 and aspartate 162. A DDXXD motif motif is present at residues 158–162 (DDLAD).

Belongs to the FPP/GGPP synthase family. Requires Mg(2+) as cofactor.

It catalyses the reaction isopentenyl diphosphate + (2E)-geranyl diphosphate = (2E,6E)-farnesyl diphosphate + diphosphate. It functions in the pathway pheromone biosynthesis. In terms of biological role, farnesyl pyrophosphate synthase involved in murgantiol biosynthesis, a male-released aggregation pheromone, by catalyzing the formation of (2E,6E)-farnesyl diphosphate. The chain is Farnesyl pyrophosphate synthase from Murgantia histrionica (Harlequin bug).